We begin with the raw amino-acid sequence, 486 residues long: FAD-dependent oxidoreductase domain-containing protein 1 (486 aa).

Residues 66 to 82 (VVIVGGGVLGLSVAYWL) form a helical membrane-spanning segment.

Associates with components of the mitochondrial respiratory chain complex I. FAD serves as cofactor.

It is found in the mitochondrion inner membrane. In terms of biological role, required for the assembly of the mitochondrial membrane respiratory chain NADH dehydrogenase (Complex I). Involved in mid-late stages of complex I assembly. The polypeptide is FAD-dependent oxidoreductase domain-containing protein 1 (FOXRED1) (Bos taurus (Bovine)).